A 437-amino-acid chain; its full sequence is Pterin deaminase (437 aa).

A divalent metal cation is bound by residues H80 and H82. K85 is a substrate binding site. H231 contributes to the a divalent metal cation binding site. E234 functions as the Proton donor in the catalytic mechanism. Position 331 (D331) interacts with a divalent metal cation. 331–332 (DN) serves as a coordination point for substrate.

It belongs to the metallo-dependent hydrolases superfamily. Pterin deaminase family. It depends on a divalent metal cation as a cofactor.

It carries out the reaction a 2-amino-4-hydroxypteridine + H2O + H(+) = a 2,4-dihydroxypteridine + NH4(+). It catalyses the reaction L-sepiapterin + H2O + H(+) = (S)-xanthopterin-B2 + NH4(+). Its function is as follows. Catalyzes the deamination of many pterin metabolites, such as formylpterin, pterin-6-carboxylate, pterin-7-carboxylate, pterin, hydroxymethylpterin, biopterin, D-(+)-neopterin, isoxanthopterin, sepiapterin, folate, xanthopterin, and 7,8-dihydrohydroxymethylpterin. May be involved in a degradative pathway for catabolizing pterin rings. The chain is Pterin deaminase from Rhizobium rhizogenes (strain K84 / ATCC BAA-868) (Agrobacterium radiobacter).